Consider the following 67-residue polypeptide: Large ribosomal subunit protein uL29 (67 aa).

The protein belongs to the universal ribosomal protein uL29 family.

This is Large ribosomal subunit protein uL29 from Rubrobacter xylanophilus (strain DSM 9941 / JCM 11954 / NBRC 16129 / PRD-1).